The sequence spans 193 residues: Large ribosomal subunit protein bL25 (193 aa).

This sequence belongs to the bacterial ribosomal protein bL25 family. CTC subfamily. As to quaternary structure, part of the 50S ribosomal subunit; part of the 5S rRNA/L5/L18/L25 subcomplex. Contacts the 5S rRNA. Binds to the 5S rRNA independently of L5 and L18.

Its function is as follows. This is one of the proteins that binds to the 5S RNA in the ribosome where it forms part of the central protuberance. This is Large ribosomal subunit protein bL25 from Lachnoclostridium phytofermentans (strain ATCC 700394 / DSM 18823 / ISDg) (Clostridium phytofermentans).